Reading from the N-terminus, the 567-residue chain is Allo-aromadendrene synthase TPS4FN (567 aa).

5 residues coordinate (2E,6E)-farnesyl diphosphate: arginine 282, aspartate 319, aspartate 323, arginine 462, and aspartate 465. Residues aspartate 319 and aspartate 323 each coordinate Mg(2+). Positions 319–323 match the DDXXD motif motif; that stretch reads DDIYD. Mg(2+) is bound by residues aspartate 465 and glutamate 473.

Belongs to the terpene synthase family. Tpsb subfamily. The cofactor is Mg(2+). It depends on Mn(2+) as a cofactor.

It carries out the reaction (2E,6E)-farnesyl diphosphate = alpha-humulene + diphosphate. It catalyses the reaction (2E,6E)-farnesyl diphosphate = (+)-valencene + diphosphate. The enzyme catalyses (2E)-geranyl diphosphate = beta-myrcene + diphosphate. The catalysed reaction is (2E,6E)-farnesyl diphosphate = allo-aromadendrene + diphosphate. It carries out the reaction (2E,6E)-farnesyl diphosphate + H2O = palustrol + diphosphate. The protein operates within secondary metabolite biosynthesis; terpenoid biosynthesis. Its function is as follows. Involved in sesquiterpene olefins biosynthesis, constituants of cannabinoids and terpenoids-rich resins. Catalyzes mainly the conversion of (2E)-farnesyl diphosphate to allo-aromadendrene, and also produces minor products such as alpha-humulene, valencene and palustrol. Can also use (2E)-geranyl diphosphate as substrate with low efficiency, producing minor amounts of myrcene. In Cannabis sativa (Hemp), this protein is Allo-aromadendrene synthase TPS4FN.